The chain runs to 614 residues: V-type proton ATPase catalytic subunit A (614 aa).

Residue 247–254 (GAFGCGKT) participates in ATP binding.

Belongs to the ATPase alpha/beta chains family. As to quaternary structure, V-ATPase is a heteromultimeric enzyme made up of two complexes: the ATP-hydrolytic V1 complex and the proton translocation V0 complex. The V1 complex consists of three catalytic AB heterodimers that form a heterohexamer, three peripheral stalks each consisting of EG heterodimers, one central rotor including subunits D and F, and the regulatory subunits C and H. The proton translocation complex V0 consists of the proton transport subunit a, a ring of proteolipid subunits c9c'', rotary subunit d, subunits e and f, and the accessory subunits VhaAC45 and ATP6AP2.

The catalysed reaction is ATP + H2O + 4 H(+)(in) = ADP + phosphate + 5 H(+)(out). Its activity is regulated as follows. ATP hydrolysis occurs at the interface between the nucleotide-binding domains of subunits A and B. ATP hydrolysis triggers a conformational change in the subunits D and F, which induces a shift of subunit d. The c-ring is subsequently rotated and results in a continuous proton translocation across the membrane. Catalytic subunit of the V1 complex of vacuolar(H+)-ATPase (V-ATPase), a multisubunit enzyme composed of a peripheral complex (V1) that hydrolyzes ATP and a membrane integral complex (V0) that translocates protons. V-ATPase is responsible for acidifying and maintaining the pH of intracellular compartments and in some cell types, is targeted to the plasma membrane, where it is responsible for acidifying the extracellular environment. The protein is V-type proton ATPase catalytic subunit A (VhaA) of Aedes aegypti (Yellowfever mosquito).